We begin with the raw amino-acid sequence, 472 residues long: UDP-glycosyltransferase 100 (472 aa).

The active-site Proton acceptor is the H15. Residue H15 participates in an anthocyanidin binding. Residue D117 is the Charge relay of the active site. 7 residues coordinate UDP-alpha-D-glucose: A344, Q346, H361, W364, N365, S366, and E369. G384 serves as a coordination point for an anthocyanidin. Residues E385 and Q386 each contribute to the UDP-alpha-D-glucose site.

This sequence belongs to the UDP-glycosyltransferase family.

It carries out the reaction (20S)-protopanaxadiol + UDP-alpha-D-glucose = (20S)-ginsenoside C-K + UDP + H(+). The catalysed reaction is (20S)-protopanaxatriol + UDP-alpha-D-glucose = (20S)-ginsenoside Rh1 + UDP + H(+). It catalyses the reaction (20S)-ginsenoside F1 + UDP-alpha-D-glucose = (20S)-ginsenoside Rg1 + UDP + H(+). The protein operates within secondary metabolite biosynthesis; terpenoid biosynthesis. Component of the dammarane-type triterpene saponins (e.g. PPT-type ginsenosides or panaxosides) biosynthetic pathway. Glycosyltransferase that catalyzes the biosynthesis of ginsenoside Rh1 from protopanaxatriol (PPT) and the conversion of ginsenoside F1 to ginsenoside Rg1. This Panax ginseng (Korean ginseng) protein is UDP-glycosyltransferase 100.